Consider the following 893-residue polypeptide: Dolichyl-phosphate-mannose--protein mannosyltransferase 1 (893 aa).

The next 7 helical transmembrane spans lie at 29 to 49 (FSFL…CVRA), 77 to 97 (LLMD…AALT), 124 to 144 (LFTC…VYFP), 147 to 167 (SKTA…LITM), 170 to 190 (YIMI…YWSV), 224 to 244 (AMFT…NLLG), and 258 to 278 (FSYI…VFAV). The 55-residue stretch at 310-364 (FADVAYGSLVTIRNAIPEHGYLHSSELLYPEGTEQQIISLVDEPNQNALWIIEHE) folds into the MIR 1 domain. Asn-370 is a glycosylation site (N-linked (GlcNAc...) asparagine). MIR domains follow at residues 374 to 433 (IELL…IQIL) and 443 to 499 (NGTV…IESN). A glycan (N-linked (GlcNAc...) asparagine) is linked at Asn-443. Phosphothreonine is present on Thr-451. Transmembrane regions (helical) follow at residues 573–593 (FVWY…IFCL), 610–630 (YNYN…PYIL), and 643–663 (ALYF…NAVF). Asn-665 carries an N-linked (GlcNAc...) asparagine glycan. The chain crosses the membrane as a helical span at residues 671–691 (ALSVIIMALMFLVYRLYSPFT). The N-linked (GlcNAc...) asparagine glycan is linked to Asn-720. The interval 785–893 (KAEQEAREAA…VAESAQARVE (109 aa)) is disordered. Residues 786-806 (AEQEAREAAEKAASEAAERSS) show a composition bias toward basic and acidic residues. 2 stretches are compositionally biased toward low complexity: residues 807-823 (SEAA…AASV) and 854-864 (MEAAALNNAAE). Positions 868–878 (VVGSSPESVAS) are enriched in polar residues.

It belongs to the glycosyltransferase 39 family.

The protein resides in the endoplasmic reticulum membrane. Its subcellular location is the nucleus membrane. It carries out the reaction a di-trans,poly-cis-dolichyl beta-D-mannosyl phosphate + L-seryl-[protein] = 3-O-(alpha-D-mannosyl)-L-seryl-[protein] + a di-trans,poly-cis-dolichyl phosphate + H(+). It catalyses the reaction a di-trans,poly-cis-dolichyl beta-D-mannosyl phosphate + L-threonyl-[protein] = 3-O-(alpha-D-mannosyl)-L-threonyl-[protein] + a di-trans,poly-cis-dolichyl phosphate + H(+). The protein operates within protein modification; protein glycosylation. Transfers mannose from Dol-P-mannose to Ser or Thr residues on proteins. Required for normal cell growth and septum formation. Shown to actively O-mannosylate wsc1. This is Dolichyl-phosphate-mannose--protein mannosyltransferase 1 (ogm1) from Schizosaccharomyces pombe (strain 972 / ATCC 24843) (Fission yeast).